The chain runs to 336 residues: Holliday junction branch migration complex subunit RuvB (336 aa).

Positions 1–185 (MSIIVERLLS…FGVLSRVEYY (185 aa)) are large ATPase domain (RuvB-L). Residues Leu-24, Arg-25, Gly-66, Lys-69, Thr-70, Thr-71, 132–134 (EDF), Arg-175, Tyr-185, and Arg-222 contribute to the ATP site. Thr-70 serves as a coordination point for Mg(2+). The interval 186-256 (TVDQLSAIVE…ITQMALELLQ (71 aa)) is small ATPAse domain (RuvB-S). Positions 259–336 (KLGLDHIDHK…EHFGMEIPKV (78 aa)) are head domain (RuvB-H). DNA contacts are provided by Arg-314 and Arg-319.

This sequence belongs to the RuvB family. Homohexamer. Forms an RuvA(8)-RuvB(12)-Holliday junction (HJ) complex. HJ DNA is sandwiched between 2 RuvA tetramers; dsDNA enters through RuvA and exits via RuvB. An RuvB hexamer assembles on each DNA strand where it exits the tetramer. Each RuvB hexamer is contacted by two RuvA subunits (via domain III) on 2 adjacent RuvB subunits; this complex drives branch migration. In the full resolvosome a probable DNA-RuvA(4)-RuvB(12)-RuvC(2) complex forms which resolves the HJ.

Its subcellular location is the cytoplasm. It carries out the reaction ATP + H2O = ADP + phosphate + H(+). The RuvA-RuvB-RuvC complex processes Holliday junction (HJ) DNA during genetic recombination and DNA repair, while the RuvA-RuvB complex plays an important role in the rescue of blocked DNA replication forks via replication fork reversal (RFR). RuvA specifically binds to HJ cruciform DNA, conferring on it an open structure. The RuvB hexamer acts as an ATP-dependent pump, pulling dsDNA into and through the RuvAB complex. RuvB forms 2 homohexamers on either side of HJ DNA bound by 1 or 2 RuvA tetramers; 4 subunits per hexamer contact DNA at a time. Coordinated motions by a converter formed by DNA-disengaged RuvB subunits stimulates ATP hydrolysis and nucleotide exchange. Immobilization of the converter enables RuvB to convert the ATP-contained energy into a lever motion, pulling 2 nucleotides of DNA out of the RuvA tetramer per ATP hydrolyzed, thus driving DNA branch migration. The RuvB motors rotate together with the DNA substrate, which together with the progressing nucleotide cycle form the mechanistic basis for DNA recombination by continuous HJ branch migration. Branch migration allows RuvC to scan DNA until it finds its consensus sequence, where it cleaves and resolves cruciform DNA. The chain is Holliday junction branch migration complex subunit RuvB from Bacillus cereus (strain ATCC 14579 / DSM 31 / CCUG 7414 / JCM 2152 / NBRC 15305 / NCIMB 9373 / NCTC 2599 / NRRL B-3711).